We begin with the raw amino-acid sequence, 156 residues long: Adult-specific rigid cuticular protein 15.5 (156 aa).

Positions 23–84 constitute a Chitin-binding type R&amp;R domain; the sequence is IGNYAFNYGT…SVKTNEPGTA (62 aa).

In terms of biological role, component of the rigid cuticle of the spider. The sequence is that of Adult-specific rigid cuticular protein 15.5 from Araneus diadematus (European garden spider).